Reading from the N-terminus, the 926-residue chain is Ubiquitin carboxyl-terminal hydrolase 4 (926 aa).

One can recognise a Rhodanese domain in the interval 205–328; the sequence is SQMEILLIDI…WLKSNYGSQV (124 aa). Residue Ser-443 is modified to Phosphoserine. One can recognise a USP domain in the interval 562–923; that stretch reads VGLENLGNSC…NAYVLFYHRV (362 aa). The active-site Nucleophile is Cys-571. The active-site Proton acceptor is His-880.

The protein belongs to the peptidase C19 family. In terms of assembly, interacts with BRO1, RFU1 and VPS32. Associates with the 26S proteasome.

It localises to the cytoplasm. It is found in the late endosome membrane. The catalysed reaction is Thiol-dependent hydrolysis of ester, thioester, amide, peptide and isopeptide bonds formed by the C-terminal Gly of ubiquitin (a 76-residue protein attached to proteins as an intracellular targeting signal).. With respect to regulation, RFU1 is an inhibitor of deubiquitination activity. Ubiquitin thioesterase that acts at the late endosome/prevacuolar compartment to recover ubiquitin from ubiquitinated membrane proteins en route to the vacuole. Also removes ubiquitin from soluble proteins targeted to proteasomes. Is essential to maintain a normal level of free ubiquitin. Involved in the ammonium-induced down-regulation of the GAP1 permease and the UME3 destruction in response to oxidative stress. Has a role in the RAD9 checkpoint response to TOP1 poisons. Required for promoting coordination of DNA replication and avoids DNA overreplication. This is Ubiquitin carboxyl-terminal hydrolase 4 (DOA4) from Saccharomyces cerevisiae (strain YJM789) (Baker's yeast).